Here is a 1905-residue protein sequence, read N- to C-terminus: Low-density lipoprotein receptor-related protein 4 (1905 aa).

The N-terminal stretch at 1–20 (MRRWWGALLLGALLCAHGIA) is a signal peptide. At 21-1725 (SSLECACGRS…AAPGEGLHVS (1705 aa)) the chain is on the extracellular side. LDL-receptor class A domains lie at 26–67 (ACGR…DGCT), 70–106 (TCSPLDFHCDNGKCIRRSWVCDGDNDCEDDSDEQDCP), 109–144 (ECEEDEFPCQNGYCIRSLWHCDGDNDCGDNSDEQCD), 147–183 (KCSDKEFRCSDGSCIAEHWYCDGDTDCKDGSDEESCP), 190–226 (PCNLEEFQCAYGRCILDIYHCDGDDDCGDWSDESDCS), 230–266 (PCRSGEFMCDSGLCINSGWRCDGDADCDDQSDERNCT), 269–305 (MCTAEQFRCRSGRCVRLSWRCDGEDDCADNSDEENCE), and 311–350 (QCASDQFLCWNGRCIGQRKLCNGINDCGDSSDESPQQNCR). Disulfide bonds link Cys-27–Cys-44, Cys-34–Cys-57, Cys-51–Cys-66, Cys-71–Cys-83, Cys-78–Cys-96, Cys-90–Cys-105, Cys-110–Cys-122, Cys-117–Cys-135, Cys-129–Cys-143, Cys-148–Cys-160, Cys-155–Cys-173, Cys-167–Cys-182, Cys-191–Cys-203, Cys-198–Cys-216, Cys-210–Cys-225, Cys-231–Cys-243, Cys-238–Cys-256, Cys-250–Cys-265, Cys-270–Cys-282, Cys-277–Cys-295, Cys-289–Cys-304, Cys-312–Cys-324, Cys-319–Cys-337, Cys-331–Cys-349, Cys-358–Cys-369, Cys-365–Cys-378, Cys-380–Cys-393, Cys-399–Cys-409, Cys-405–Cys-418, and Cys-420–Cys-433. N-linked (GlcNAc...) asparagine glycosylation is present at Asn-264. Residues 354–394 (GEENCNVNNGGCAQKCQMVRGAVQCTCHTGYRLTEDGRTCQ) form the EGF-like 1; atypical domain. An EGF-like 2; calcium-binding domain is found at 395–434 (DVNECAEEGYCSQGCTNTEGAFQCWCEAGYELRPDRRSCK). 5 LDL-receptor class B repeats span residues 480 to 522 (ELVF…DWVH), 523 to 565 (DKLY…HPME), 566 to 609 (GTIY…DYAG), 610 to 652 (RRMY…FEDS), and 653 to 693 (LYWT…LHPQ). The N-linked (GlcNAc...) asparagine glycan is linked to Asn-498. Positions 698–737 (GKNRCGDNNGGCTHLCLPSGQNYTCACPTGFRKINSHACA) constitute an EGF-like 3 domain. 3 disulfide bridges follow: Cys-702–Cys-713, Cys-709–Cys-722, and Cys-724–Cys-736. Asn-719 carries N-linked (GlcNAc...) asparagine glycosylation. LDL-receptor class B repeat units follow at residues 785–827 (DHVY…DWVT), 828–870 (NKLY…EPMG), 871–914 (GYMY…DYGS), 915–956 (QRLY…LYGQ), and 957–998 (RIYW…FHRQ). Asn-901 is a glycosylation site (N-linked (GlcNAc...) asparagine). An N-linked (GlcNAc...) asparagine glycan is attached at Asn-1077. LDL-receptor class B repeat units follow at residues 1093 to 1135 (GKVY…DAIG), 1136 to 1178 (RKVY…YHEM), 1179 to 1222 (GFMY…DKTS), 1223 to 1263 (SQLL…LLDS), 1264 to 1306 (YIYW…DRAQ), 1397 to 1439 (GKVY…DWVA), 1440 to 1482 (RNLY…FPRK), 1483 to 1526 (GYLF…DYDT), 1527 to 1568 (RRIY…QDRW), and 1569 to 1610 (IYWT…SPQR). N-linked (GlcNAc...) asparagine glycans are attached at residues Asn-1415 and Asn-1467. The segment at 1661-1696 (ATSMNEKSPVLPNTLPTTLHSSTTKTRTSLEGAGGR) is disordered. The segment covering 1674-1690 (TLPTTLHSSTTKTRTSL) has biased composition (low complexity). The chain crosses the membrane as a helical span at residues 1726–1746 (YAIGGLLSILLILLVIAALML). Topologically, residues 1747-1905 (YRHRKSKFTD…ERKLSSESQV (159 aa)) are cytoplasmic. Positions 1852–1905 (ASSGSLDDTETEQLLQEEQSECSSVHTAATPERRGSLPDTGWKHERKLSSESQV) are disordered. The span at 1882 to 1905 (PERRGSLPDTGWKHERKLSSESQV) shows a compositional bias: basic and acidic residues.

The protein belongs to the LDLR family. In terms of assembly, homooligomer. Interacts with MUSK; the heterodimer forms an AGRIN receptor complex that binds AGRIN resulting in activation of MUSK. Interacts (via the extracellular domain) with SOST; the interaction facilitates the inhibition of Wnt signaling. Interacts with MESD; the interaction promotes glycosylation of LRP4 and its cell-surface expression. In terms of processing, N-glycosylation is required for cell surface location.

The protein localises to the cell membrane. Mediates SOST-dependent inhibition of bone formation. Functions as a specific facilitator of SOST-mediated inhibition of Wnt signaling. Plays a key role in the formation and the maintenance of the neuromuscular junction (NMJ), the synapse between motor neuron and skeletal muscle. Directly binds AGRIN and recruits it to the MUSK signaling complex. Mediates the AGRIN-induced phosphorylation of MUSK, the kinase of the complex. The activation of MUSK in myotubes induces the formation of NMJ by regulating different processes including the transcription of specific genes and the clustering of AChR in the postsynaptic membrane. Alternatively, may be involved in the negative regulation of the canonical Wnt signaling pathway, being able to antagonize the LRP6-mediated activation of this pathway. More generally, has been proposed to function as a cell surface endocytic receptor binding and internalizing extracellular ligands for degradation by lysosomes. Plays an essential role in the process of digit differentiation. The protein is Low-density lipoprotein receptor-related protein 4 (Lrp4) of Mus musculus (Mouse).